A 431-amino-acid chain; its full sequence is uncharacterized protein (431 aa).

Residues 1 to 258 (MPSQMREAIT…HGLIDLERAG (258 aa)) enclose the Peptidase S8 domain.

This sequence belongs to the peptidase S8 family.

This is an uncharacterized protein from Sinorhizobium fredii (strain NBRC 101917 / NGR234).